Here is a 152-residue protein sequence, read N- to C-terminus: D-aminoacyl-tRNA deacylase (152 aa).

The Gly-cisPro motif, important for rejection of L-amino acids motif lies at 142–143 (GP).

This sequence belongs to the DTD family. In terms of assembly, homodimer.

The protein resides in the cytoplasm. It catalyses the reaction glycyl-tRNA(Ala) + H2O = tRNA(Ala) + glycine + H(+). It carries out the reaction a D-aminoacyl-tRNA + H2O = a tRNA + a D-alpha-amino acid + H(+). Its function is as follows. An aminoacyl-tRNA editing enzyme that deacylates mischarged D-aminoacyl-tRNAs. Also deacylates mischarged glycyl-tRNA(Ala), protecting cells against glycine mischarging by AlaRS. Acts via tRNA-based rather than protein-based catalysis; rejects L-amino acids rather than detecting D-amino acids in the active site. By recycling D-aminoacyl-tRNA to D-amino acids and free tRNA molecules, this enzyme counteracts the toxicity associated with the formation of D-aminoacyl-tRNA entities in vivo and helps enforce protein L-homochirality. The chain is D-aminoacyl-tRNA deacylase from Burkholderia multivorans (strain ATCC 17616 / 249).